We begin with the raw amino-acid sequence, 313 residues long: Intelectin-like protein (313 aa).

A Fibrinogen C-terminal domain is found at 33–251 (TSCCSQTSPG…NNEKAPMALC (219 aa)). Ca(2+)-binding residues include His-86, Glu-87, Asn-89, Gly-92, Gly-97, Asp-98, and Asp-133. Cystine bridges form between Cys-94/Cys-280, Cys-199/Cys-259, and Cys-251/Cys-265. Ca(2+) is bound by residues Asn-260, Glu-262, Glu-274, and Asp-282. Residues 262–263 (EH) and Glu-274 each bind a carbohydrate.

In terms of assembly, monomer, homodimer, homotrimer and homotetramer. Mostly monomeric or dimeric.

The protein localises to the secreted. In terms of biological role, binds mannan, mannose and, to a lesser degree, D-lactose, N-acetylgalactosamine, N-acetylglucosamine and beta-D-glucose. The chain is Intelectin-like protein from Alligator mississippiensis (American alligator).